A 310-amino-acid chain; its full sequence is Olfactory receptor 5P52 (310 aa).

Residues 1 to 25 are Extracellular-facing; sequence MEAENHTTVAELIILGLTEDPKLCI. Residue N5 is glycosylated (N-linked (GlcNAc...) asparagine). Residues 26–46 form a helical membrane-spanning segment; the sequence is VFFVIFLGVYIITLVGNISII. At 47–54 the chain is on the cytoplasmic side; sequence TLIRISSQ. The helical transmembrane segment at 55 to 75 threads the bilayer; the sequence is LHTPMYLFLSHLAFVDIVFST. Residues 76 to 99 are Extracellular-facing; the sequence is SVSVIMLMELLGHGLVLSVATCAA. A disulfide bond links C97 and C189. A helical transmembrane segment spans residues 100-120; it reads QLCMTVSFGSAECFLLAAMAY. Residues 121–133 lie on the Cytoplasmic side of the membrane; it reads DRYVAICSPLLYS. Residues 134-154 form a helical membrane-spanning segment; it reads TLMSSRVCFLLLGISYVGGFV. Residues 155-196 are Extracellular-facing; the sequence is NGWTFTGCVLSLSFCGPTQINHFFCDFSPLLKVSCSDVSIIG. A helical transmembrane segment spans residues 197 to 217; the sequence is IIPSISSGSIIVVTVFVIAVS. Residues 218–237 are Cytoplasmic-facing; that stretch reads YIYILITILKMRSTEGRHKA. Residues 238–258 traverse the membrane as a helical segment; sequence FSTCTSHLTAVTLFYGTITVI. Topologically, residues 259 to 271 are extracellular; sequence YVMPKSSYSTEQN. A helical membrane pass occupies residues 272–292; the sequence is KVISLFYTVVIPMLNPLIYSL. Topologically, residues 293–310 are cytoplasmic; the sequence is RNRDVKDALRKAIVRVYS.

This sequence belongs to the G-protein coupled receptor 1 family.

It is found in the cell membrane. Functionally, potential odorant receptor. The sequence is that of Olfactory receptor 5P52 from Mus musculus (Mouse).